We begin with the raw amino-acid sequence, 592 residues long: A-type ATP synthase subunit A (592 aa).

231 to 238 is a binding site for ATP; that stretch reads GGFGTGKT.

Belongs to the ATPase alpha/beta chains family. As to quaternary structure, has multiple subunits with at least A(3), B(3), C, D, E, F, H, I and proteolipid K(x).

It localises to the cell membrane. It catalyses the reaction ATP + H2O + 4 H(+)(in) = ADP + phosphate + 5 H(+)(out). Functionally, component of the A-type ATP synthase that produces ATP from ADP in the presence of a proton gradient across the membrane. The A chain is the catalytic subunit. The sequence is that of A-type ATP synthase subunit A from Staphylothermus marinus (strain ATCC 43588 / DSM 3639 / JCM 9404 / F1).